The following is a 171-amino-acid chain: MRMNLKKLIINSLFLAVGVVLNQITPPILFGMKPDFSLAMLFIIILLNDDYKTCISTGVVAGLLAAAVTTFPGGQLPNIIDRIVTTSLVFIALRPFKDKINDKIHMIITTIVGTIISGSVFLGSALIIVGLPASFKALFITVVLPATIINAIVGTIIFVAVKKSMRVVFRQ.

4 helical membrane-spanning segments follow: residues 9–31 (IINS…ILFG), 58–80 (GVVA…PNII), 107–129 (IITT…LIIV), and 139–161 (FITV…FVAV).

Belongs to the vitamin uptake transporter (VUT/ECF) (TC 2.A.88) family. TrpP subfamily.

The protein localises to the cell membrane. Its function is as follows. Probably involved in tryptophan uptake. In Clostridium acetobutylicum (strain ATCC 824 / DSM 792 / JCM 1419 / IAM 19013 / LMG 5710 / NBRC 13948 / NRRL B-527 / VKM B-1787 / 2291 / W), this protein is Probable tryptophan transport protein (trpP).